The following is a 41-amino-acid chain: Photosystem I reaction center subunit IX (41 aa).

A helical membrane pass occupies residues 7-27 (YLSTAPVITAIWLGITAGILI).

It belongs to the PsaJ family.

The protein resides in the cellular thylakoid membrane. Its function is as follows. May help in the organization of the PsaE and PsaF subunits. This Cyanothece sp. (strain PCC 7425 / ATCC 29141) protein is Photosystem I reaction center subunit IX.